A 269-amino-acid polypeptide reads, in one-letter code: Shikimate dehydrogenase (NADP(+)) (269 aa).

Shikimate is bound by residues 19–21 and threonine 66; that span reads SLS. Catalysis depends on lysine 70, which acts as the Proton acceptor. Position 82 (aspartate 82) interacts with NADP(+). Shikimate contacts are provided by asparagine 91 and aspartate 106. Residues 130–134, 153–158, and isoleucine 214 contribute to the NADP(+) site; these read GAGGA and NRTKEK. Residue tyrosine 216 participates in shikimate binding. Glycine 235 contributes to the NADP(+) binding site. Glutamine 242 provides a ligand contact to shikimate.

It belongs to the shikimate dehydrogenase family. As to quaternary structure, homodimer.

The enzyme catalyses shikimate + NADP(+) = 3-dehydroshikimate + NADPH + H(+). The protein operates within metabolic intermediate biosynthesis; chorismate biosynthesis; chorismate from D-erythrose 4-phosphate and phosphoenolpyruvate: step 4/7. Its function is as follows. Involved in the biosynthesis of the chorismate, which leads to the biosynthesis of aromatic amino acids. Catalyzes the reversible NADPH linked reduction of 3-dehydroshikimate (DHSA) to yield shikimate (SA). This Aquifex aeolicus (strain VF5) protein is Shikimate dehydrogenase (NADP(+)).